Reading from the N-terminus, the 67-residue chain is Alpha-conotoxin-like Qc1.1b (67 aa).

The N-terminal stretch at 1–21 (MGMRMMFTMFLLVVLAITVVS) is a signal peptide. Residues 22–46 (FTSDHASDGRNTAANDKASKLMALR) constitute a propeptide that is removed on maturation. 2 disulfide bridges follow: Cys-49-Cys-55 and Cys-50-Cys-63. The interval 51–53 (DNP) is lacks the Ser-Xaa-Pro motif that is crucial for potent interaction with nAChR.

Belongs to the conotoxin A superfamily. As to expression, expressed by the venom duct.

The protein localises to the secreted. In terms of biological role, alpha-conotoxins act on postsynaptic membranes, they bind to the nicotinic acetylcholine receptors (nAChR) and thus inhibit them. Has possibly a distinct nAChR binding mode from other alpha-conotoxins, due to a different three residue motif (lacks the Ser-Xaa-Pro motif). This Conus quercinus (Oak cone) protein is Alpha-conotoxin-like Qc1.1b.